The primary structure comprises 158 residues: NAD(P)H-quinone oxidoreductase subunit J, chloroplastic (158 aa).

This sequence belongs to the complex I 30 kDa subunit family. As to quaternary structure, NDH is composed of at least 16 different subunits, 5 of which are encoded in the nucleus.

It is found in the plastid. The protein resides in the chloroplast thylakoid membrane. The catalysed reaction is a plastoquinone + NADH + (n+1) H(+)(in) = a plastoquinol + NAD(+) + n H(+)(out). It carries out the reaction a plastoquinone + NADPH + (n+1) H(+)(in) = a plastoquinol + NADP(+) + n H(+)(out). Functionally, NDH shuttles electrons from NAD(P)H:plastoquinone, via FMN and iron-sulfur (Fe-S) centers, to quinones in the photosynthetic chain and possibly in a chloroplast respiratory chain. The immediate electron acceptor for the enzyme in this species is believed to be plastoquinone. Couples the redox reaction to proton translocation, and thus conserves the redox energy in a proton gradient. The sequence is that of NAD(P)H-quinone oxidoreductase subunit J, chloroplastic from Panax ginseng (Korean ginseng).